We begin with the raw amino-acid sequence, 536 residues long: CTP synthase (536 aa).

Residues 1–268 (MSTKYVFVTG…DNLVCEKLHL (268 aa)) form an amidoligase domain region. S14 lines the CTP pocket. S14 contacts UTP. Position 15–20 (15–20 (ALGKGI)) interacts with ATP. Residue Y55 coordinates L-glutamine. Position 72 (D72) interacts with ATP. Mg(2+)-binding residues include D72 and E142. CTP contacts are provided by residues 149–151 (DIE), 189–194 (KTKPTQ), and K225. UTP is bound by residues 189–194 (KTKPTQ) and K225. A Glutamine amidotransferase type-1 domain is found at 293 to 535 (KIALVGKYVE…IKAALEENKS (243 aa)). G355 provides a ligand contact to L-glutamine. C382 serves as the catalytic Nucleophile; for glutamine hydrolysis. L-glutamine contacts are provided by residues 383 to 386 (LGMQ), E406, and R463. Active-site residues include H508 and E510.

Belongs to the CTP synthase family. As to quaternary structure, homotetramer.

It catalyses the reaction UTP + L-glutamine + ATP + H2O = CTP + L-glutamate + ADP + phosphate + 2 H(+). It carries out the reaction L-glutamine + H2O = L-glutamate + NH4(+). The catalysed reaction is UTP + NH4(+) + ATP = CTP + ADP + phosphate + 2 H(+). It functions in the pathway pyrimidine metabolism; CTP biosynthesis via de novo pathway; CTP from UDP: step 2/2. With respect to regulation, allosterically activated by GTP, when glutamine is the substrate; GTP has no effect on the reaction when ammonia is the substrate. The allosteric effector GTP functions by stabilizing the protein conformation that binds the tetrahedral intermediate(s) formed during glutamine hydrolysis. Inhibited by the product CTP, via allosteric rather than competitive inhibition. Catalyzes the ATP-dependent amination of UTP to CTP with either L-glutamine or ammonia as the source of nitrogen. Regulates intracellular CTP levels through interactions with the four ribonucleotide triphosphates. This chain is CTP synthase, found in Clostridium beijerinckii (strain ATCC 51743 / NCIMB 8052) (Clostridium acetobutylicum).